The chain runs to 466 residues: 3-isopropylmalate dehydratase large subunit (466 aa).

Positions 347, 407, and 410 each coordinate [4Fe-4S] cluster.

The protein belongs to the aconitase/IPM isomerase family. LeuC type 1 subfamily. In terms of assembly, heterodimer of LeuC and LeuD. It depends on [4Fe-4S] cluster as a cofactor.

It carries out the reaction (2R,3S)-3-isopropylmalate = (2S)-2-isopropylmalate. It functions in the pathway amino-acid biosynthesis; L-leucine biosynthesis; L-leucine from 3-methyl-2-oxobutanoate: step 2/4. Its function is as follows. Catalyzes the isomerization between 2-isopropylmalate and 3-isopropylmalate, via the formation of 2-isopropylmaleate. The polypeptide is 3-isopropylmalate dehydratase large subunit (Escherichia coli O45:K1 (strain S88 / ExPEC)).